A 275-amino-acid polypeptide reads, in one-letter code: Holocytochrome c-type synthase (275 aa).

2 disordered regions span residues 1-59 (MGLS…KTNS) and 83-102 (KENLDPSNLMPPPNQTPAPD). Glycine 2 is lipidated: N-myristoyl glycine. The span at 9–28 (AASTVQTSTPAASDHQTAAP) shows a compositional bias: polar residues. HRM repeat units follow at residues 31-36 (GCPMHE) and 41-46 (GCPVSA). The segment covering 48–59 (PSDSTCGSKTNS) has biased composition (polar residues). Pro residues predominate over residues 91–102 (LMPPPNQTPAPD).

Belongs to the cytochrome c-type heme lyase family.

Its subcellular location is the mitochondrion inner membrane. It localises to the membrane. It catalyses the reaction holo-[cytochrome c] = apo-[cytochrome c] + heme b. In terms of biological role, lyase that catalyzes the covalent linking of the heme group to the cytochrome C apoprotein to produce the mature functional cytochrome. This Bos taurus (Bovine) protein is Holocytochrome c-type synthase.